We begin with the raw amino-acid sequence, 555 residues long: CTP synthase (555 aa).

The tract at residues 1–271 is amidoligase domain; the sequence is MVKRGKKTKY…DDKLAELFNI (271 aa). Position 19 (serine 19) interacts with CTP. Serine 19 lines the UTP pocket. ATP is bound by residues 20-25 and aspartate 77; that span reads SLGKGL. Mg(2+) contacts are provided by aspartate 77 and glutamate 145. CTP is bound by residues 152–154, 192–197, and lysine 228; these read DIE and KTKPTQ. Residues 192-197 and lysine 228 each bind UTP; that span reads KTKPTQ. The region spanning 297–537 is the Glutamine amidotransferase type-1 domain; that stretch reads RIGIVGKYVE…VKAALEHRDA (241 aa). An L-glutamine-binding site is contributed by glycine 358. The active-site Nucleophile; for glutamine hydrolysis is the cysteine 385. L-glutamine is bound by residues 386–389, glutamate 409, and arginine 466; that span reads LGLQ. Residues histidine 510 and glutamate 512 contribute to the active site. A disordered region spans residues 535–555; it reads RDAQQRQPPAEVKKLAVGKNG.

The protein belongs to the CTP synthase family. Homotetramer.

The enzyme catalyses UTP + L-glutamine + ATP + H2O = CTP + L-glutamate + ADP + phosphate + 2 H(+). It catalyses the reaction L-glutamine + H2O = L-glutamate + NH4(+). The catalysed reaction is UTP + NH4(+) + ATP = CTP + ADP + phosphate + 2 H(+). It functions in the pathway pyrimidine metabolism; CTP biosynthesis via de novo pathway; CTP from UDP: step 2/2. Allosterically activated by GTP, when glutamine is the substrate; GTP has no effect on the reaction when ammonia is the substrate. The allosteric effector GTP functions by stabilizing the protein conformation that binds the tetrahedral intermediate(s) formed during glutamine hydrolysis. Inhibited by the product CTP, via allosteric rather than competitive inhibition. Its function is as follows. Catalyzes the ATP-dependent amination of UTP to CTP with either L-glutamine or ammonia as the source of nitrogen. Regulates intracellular CTP levels through interactions with the four ribonucleotide triphosphates. This Anaeromyxobacter dehalogenans (strain 2CP-1 / ATCC BAA-258) protein is CTP synthase.